Here is a 331-residue protein sequence, read N- to C-terminus: XylDLEGF operon transcriptional activator 1 (331 aa).

Residues 214–315 (ERVVQFIEEN…GELPSDTLRR (102 aa)) form the HTH araC/xylS-type domain. DNA-binding regions (H-T-H motif) lie at residues 231–252 (ERLA…EKHA) and 282–305 (VTEM…RSTF).

It is found in the cytoplasm. Regulatory protein of the TOL plasmid xyl operons. XylS activates the xylXYZLTEGFJQKIH operon required for the degradation of toluene, m-xylene and p-xylene. The protein is XylDLEGF operon transcriptional activator 1 (xylS1) of Pseudomonas putida (Arthrobacter siderocapsulatus).